The following is a 466-amino-acid chain: Probable sensor protein PcoS (466 aa).

Over Met-1–Arg-10 the chain is Cytoplasmic. A helical transmembrane segment spans residues Leu-11–Ile-31. Residues Ser-32–Thr-171 lie on the Periplasmic side of the membrane. The helical transmembrane segment at Trp-172–Thr-192 threads the bilayer. The 54-residue stretch at Arg-193–Arg-246 folds into the HAMP domain. The Cytoplasmic segment spans residues Arg-193–Asp-466. A Histidine kinase domain is found at Asp-254–Asp-466. Phosphohistidine; by autocatalysis is present on His-257.

Its subcellular location is the cell inner membrane. The catalysed reaction is ATP + protein L-histidine = ADP + protein N-phospho-L-histidine.. Its function is as follows. Probable member of a two-component regulatory system PcoS/PcoR. May activate PcoR by phosphorylation. The polypeptide is Probable sensor protein PcoS (pcoS) (Escherichia coli).